Consider the following 396-residue polypeptide: Phosphoglycerate kinase (396 aa).

Substrate contacts are provided by residues 19–21 (DFN), Arg34, 57–60 (HLGK), Arg116, and Arg153. Residues Lys204, Glu324, and 351 to 354 (GGDT) contribute to the ATP site.

It belongs to the phosphoglycerate kinase family. As to quaternary structure, monomer.

Its subcellular location is the cytoplasm. It catalyses the reaction (2R)-3-phosphoglycerate + ATP = (2R)-3-phospho-glyceroyl phosphate + ADP. It participates in carbohydrate degradation; glycolysis; pyruvate from D-glyceraldehyde 3-phosphate: step 2/5. This is Phosphoglycerate kinase from Maridesulfovibrio salexigens (strain ATCC 14822 / DSM 2638 / NCIMB 8403 / VKM B-1763) (Desulfovibrio salexigens).